A 185-amino-acid chain; its full sequence is Phospholipase A2 inhibitor 25 kDa subunit (185 aa).

8 cysteine pairs are disulfide-bonded: Cys-3–Cys-27, Cys-6–Cys-13, Cys-20–Cys-48, Cys-54–Cys-75, Cys-76–Cys-81, Cys-101–Cys-126, Cys-119–Cys-146, and Cys-152–Cys-172.

Belongs to the CNF-like-inhibitor family. Heterodimer with phospholipase A2 inhibitor 31 kDa. As to expression, expressed by the liver.

The protein resides in the secreted. Its function is as follows. Inhibits the enzymatic activity of phospholipase A2. This Naja kaouthia (Monocled cobra) protein is Phospholipase A2 inhibitor 25 kDa subunit.